The sequence spans 108 residues: MTIQIKNAINSYAYDKVVSLLEKGDIVTPQILDKWEKELHQTMKQNDQKIGRNTVRELLVQYILSEFDVKAFGVESKAYQKHEISDKTIRRMKNQRKKKFADLKITKV.

This is an uncharacterized protein from Enterobacteria phage T4 (Bacteriophage T4).